Consider the following 431-residue polypeptide: Serine--tRNA ligase (431 aa).

236-238 is a binding site for L-serine; sequence TAE. 267–269 is an ATP binding site; the sequence is RSE. L-serine is bound at residue Glu290. 354-357 provides a ligand contact to ATP; sequence EISS. Ser389 lines the L-serine pocket.

Belongs to the class-II aminoacyl-tRNA synthetase family. Type-1 seryl-tRNA synthetase subfamily. In terms of assembly, homodimer. The tRNA molecule binds across the dimer.

It localises to the cytoplasm. It carries out the reaction tRNA(Ser) + L-serine + ATP = L-seryl-tRNA(Ser) + AMP + diphosphate + H(+). The enzyme catalyses tRNA(Sec) + L-serine + ATP = L-seryl-tRNA(Sec) + AMP + diphosphate + H(+). It functions in the pathway aminoacyl-tRNA biosynthesis; selenocysteinyl-tRNA(Sec) biosynthesis; L-seryl-tRNA(Sec) from L-serine and tRNA(Sec): step 1/1. Its function is as follows. Catalyzes the attachment of serine to tRNA(Ser). Is also able to aminoacylate tRNA(Sec) with serine, to form the misacylated tRNA L-seryl-tRNA(Sec), which will be further converted into selenocysteinyl-tRNA(Sec). In Janthinobacterium sp. (strain Marseille) (Minibacterium massiliensis), this protein is Serine--tRNA ligase.